The chain runs to 307 residues: GTPase Era (307 aa).

The Era-type G domain maps to 13–180 (RCGFVALIGA…RRALAEMVPP (168 aa)). Residues 21-28 (GAPNVGKS) are G1. 21–28 (GAPNVGKS) is a binding site for GTP. A G2 region spans residues 47-51 (QTTRA). Residues 68-71 (DTPG) are G3. Residues 68–72 (DTPGI) and 130–133 (NKVD) each bind GTP. The G4 stretch occupies residues 130 to 133 (NKVD). The G5 stretch occupies residues 159-161 (ISA). Residues 211 to 288 (LHQELPYQST…HLFLFVKVRE (78 aa)) enclose the KH type-2 domain.

It belongs to the TRAFAC class TrmE-Era-EngA-EngB-Septin-like GTPase superfamily. Era GTPase family. Monomer.

The protein localises to the cytoplasm. Its subcellular location is the cell inner membrane. In terms of biological role, an essential GTPase that binds both GDP and GTP, with rapid nucleotide exchange. Plays a role in 16S rRNA processing and 30S ribosomal subunit biogenesis and possibly also in cell cycle regulation and energy metabolism. This Bradyrhizobium sp. (strain ORS 278) protein is GTPase Era.